The primary structure comprises 372 residues: Lipoyl synthase, mitochondrial (372 aa).

The N-terminal 27 residues, 1-27, are a transit peptide targeting the mitochondrion; it reads MSLRCGGAVRTVGPRVFGRYVFSPVRE. Cysteine 106, cysteine 111, cysteine 117, cysteine 137, cysteine 141, cysteine 144, and serine 352 together coordinate [4Fe-4S] cluster. The region spanning 122–341 is the Radical SAM core domain; that stretch reads EYATATATIM…EKVGNELGFH (220 aa).

Belongs to the radical SAM superfamily. Lipoyl synthase family. [4Fe-4S] cluster serves as cofactor.

The protein resides in the mitochondrion. It catalyses the reaction [[Fe-S] cluster scaffold protein carrying a second [4Fe-4S](2+) cluster] + N(6)-octanoyl-L-lysyl-[protein] + 2 oxidized [2Fe-2S]-[ferredoxin] + 2 S-adenosyl-L-methionine + 4 H(+) = [[Fe-S] cluster scaffold protein] + N(6)-[(R)-dihydrolipoyl]-L-lysyl-[protein] + 4 Fe(3+) + 2 hydrogen sulfide + 2 5'-deoxyadenosine + 2 L-methionine + 2 reduced [2Fe-2S]-[ferredoxin]. It functions in the pathway protein modification; protein lipoylation via endogenous pathway; protein N(6)-(lipoyl)lysine from octanoyl-[acyl-carrier-protein]: step 2/2. Catalyzes the radical-mediated insertion of two sulfur atoms into the C-6 and C-8 positions of the octanoyl moiety bound to the lipoyl domains of lipoate-dependent enzymes, thereby converting the octanoylated domains into lipoylated derivatives. The chain is Lipoyl synthase, mitochondrial from Bos taurus (Bovine).